Consider the following 72-residue polypeptide: Conotoxin Vc6.16 (72 aa).

A signal peptide spans 1–19 (MQKLIILLLVAAVLMSTQA). A propeptide spanning residues 20–44 (LFQEKRPKEKIDLLSKRKTDAEKQQ) is cleaved from the precursor. Disulfide bonds link Cys48–Cys62, Cys55–Cys66, and Cys61–Cys71.

Belongs to the conotoxin O2 superfamily. In terms of tissue distribution, expressed by the venom duct.

Its subcellular location is the secreted. Its function is as follows. Inhibits voltage-gated ion channels. This Conus victoriae (Queen Victoria cone) protein is Conotoxin Vc6.16.